Here is a 247-residue protein sequence, read N- to C-terminus: 5-oxoprolinase subunit A 1 (247 aa).

It belongs to the LamB/PxpA family. As to quaternary structure, forms a complex composed of PxpA, PxpB and PxpC.

The catalysed reaction is 5-oxo-L-proline + ATP + 2 H2O = L-glutamate + ADP + phosphate + H(+). Functionally, catalyzes the cleavage of 5-oxoproline to form L-glutamate coupled to the hydrolysis of ATP to ADP and inorganic phosphate. In Ralstonia nicotianae (strain ATCC BAA-1114 / GMI1000) (Ralstonia solanacearum), this protein is 5-oxoprolinase subunit A 1.